Reading from the N-terminus, the 156-residue chain is Small ribosomal subunit protein uS7 (156 aa).

It belongs to the universal ribosomal protein uS7 family. Part of the 30S ribosomal subunit. Contacts proteins S9 and S11.

Functionally, one of the primary rRNA binding proteins, it binds directly to 16S rRNA where it nucleates assembly of the head domain of the 30S subunit. Is located at the subunit interface close to the decoding center, probably blocks exit of the E-site tRNA. The chain is Small ribosomal subunit protein uS7 from Streptococcus agalactiae serotype Ia (strain ATCC 27591 / A909 / CDC SS700).